The following is a 336-amino-acid chain: Ornithine carbamoyltransferase, catabolic (336 aa).

Carbamoyl phosphate contacts are provided by residues 57–60 (STRT), Gln84, Arg108, and 135–138 (HPTQ). L-ornithine-binding positions include Asn168, Asp232, and 236–237 (SM). Residues 274–275 (CL) and Arg321 each bind carbamoyl phosphate.

It belongs to the aspartate/ornithine carbamoyltransferase superfamily. OTCase family.

The protein localises to the cytoplasm. The enzyme catalyses carbamoyl phosphate + L-ornithine = L-citrulline + phosphate + H(+). The protein operates within amino-acid degradation; L-arginine degradation via ADI pathway; carbamoyl phosphate from L-arginine: step 2/2. Reversibly catalyzes the transfer of the carbamoyl group from carbamoyl phosphate (CP) to the N(epsilon) atom of ornithine (ORN) to produce L-citrulline. This chain is Ornithine carbamoyltransferase, catabolic (arcB), found in Pseudomonas putida (strain ATCC 47054 / DSM 6125 / CFBP 8728 / NCIMB 11950 / KT2440).